A 217-amino-acid polypeptide reads, in one-letter code: Adenylate kinase (217 aa).

Position 10-15 (10-15 (GAGKGT)) interacts with ATP. Positions 30–59 (STGDMFRAAMKEETPLGLEAKSYIDKGELV) are NMP. AMP is bound by residues Thr-31, Arg-36, 57–59 (ELV), 85–88 (GFPR), and Gln-92. An LID region spans residues 126 to 163 (GRRICSVCGTTYHLVFNPPKTPGVCDKDGGDLYQRADD). Arg-127 contacts ATP. Zn(2+) is bound by residues Cys-130 and Cys-133. An ATP-binding site is contributed by 136–137 (TY). Residues Cys-150 and Asp-153 each coordinate Zn(2+). AMP is bound by residues Arg-160 and Arg-171. Position 199 (Gln-199) interacts with ATP.

It belongs to the adenylate kinase family. Monomer.

The protein localises to the cytoplasm. It carries out the reaction AMP + ATP = 2 ADP. It participates in purine metabolism; AMP biosynthesis via salvage pathway; AMP from ADP: step 1/1. Functionally, catalyzes the reversible transfer of the terminal phosphate group between ATP and AMP. Plays an important role in cellular energy homeostasis and in adenine nucleotide metabolism. The protein is Adenylate kinase of Bacillus velezensis (strain DSM 23117 / BGSC 10A6 / LMG 26770 / FZB42) (Bacillus amyloliquefaciens subsp. plantarum).